The following is a 370-amino-acid chain: 3-isopropylmalate dehydrogenase (370 aa).

Residue 76-89 (GPKWDQNPSELRPE) participates in NAD(+) binding. Residues arginine 96, arginine 106, arginine 134, and aspartate 224 each contribute to the substrate site. Mg(2+)-binding residues include aspartate 224, aspartate 248, and aspartate 252. 282–294 (GSAPDIAGQNIAN) contributes to the NAD(+) binding site.

The protein belongs to the isocitrate and isopropylmalate dehydrogenases family. LeuB type 1 subfamily. Homodimer. Requires Mg(2+) as cofactor. Mn(2+) is required as a cofactor.

It is found in the cytoplasm. It catalyses the reaction (2R,3S)-3-isopropylmalate + NAD(+) = 4-methyl-2-oxopentanoate + CO2 + NADH. Its pathway is amino-acid biosynthesis; L-leucine biosynthesis; L-leucine from 3-methyl-2-oxobutanoate: step 3/4. Its function is as follows. Catalyzes the oxidation of 3-carboxy-2-hydroxy-4-methylpentanoate (3-isopropylmalate) to 3-carboxy-4-methyl-2-oxopentanoate. The product decarboxylates to 4-methyl-2 oxopentanoate. The polypeptide is 3-isopropylmalate dehydrogenase (Bacillus licheniformis (strain ATCC 14580 / DSM 13 / JCM 2505 / CCUG 7422 / NBRC 12200 / NCIMB 9375 / NCTC 10341 / NRRL NRS-1264 / Gibson 46)).